The following is a 350-amino-acid chain: Methionine import ATP-binding protein MetN (350 aa).

The ABC transporter domain maps to 2–242 (IELKGISQHF…PRHDVTRALI (241 aa)). 39–46 (GRSGAGKS) is a binding site for ATP.

It belongs to the ABC transporter superfamily. Methionine importer (TC 3.A.1.24) family. As to quaternary structure, the complex is composed of two ATP-binding proteins (MetN), two transmembrane proteins (MetI) and a solute-binding protein (MetQ).

It localises to the cell inner membrane. The catalysed reaction is L-methionine(out) + ATP + H2O = L-methionine(in) + ADP + phosphate + H(+). It carries out the reaction D-methionine(out) + ATP + H2O = D-methionine(in) + ADP + phosphate + H(+). In terms of biological role, part of the ABC transporter complex MetNIQ involved in methionine import. Responsible for energy coupling to the transport system. The protein is Methionine import ATP-binding protein MetN of Ralstonia nicotianae (strain ATCC BAA-1114 / GMI1000) (Ralstonia solanacearum).